The primary structure comprises 588 residues: Succinate dehydrogenase flavoprotein subunit (588 aa).

FAD-binding positions include 14–19 (GAGGAG), 37–52 (SKVFPTRSHTVSAQGG), and Asp221. Position 45 is a tele-8alpha-FAD histidine (His45). Substrate-binding residues include His242 and Thr254. Catalysis depends on Arg286, which acts as the Proton acceptor. Position 354 (His354) interacts with substrate. Glu388 contributes to the FAD binding site. Arg399 serves as a coordination point for substrate. 404–405 (SL) is an FAD binding site.

This sequence belongs to the FAD-dependent oxidoreductase 2 family. FRD/SDH subfamily. As to quaternary structure, part of an enzyme complex containing four subunits: a flavoprotein, an iron-sulfur, cytochrome b-556, and a hydrophobic anchor protein. FAD serves as cofactor.

It is found in the cell inner membrane. It catalyses the reaction a quinone + succinate = fumarate + a quinol. It participates in carbohydrate metabolism; tricarboxylic acid cycle; fumarate from succinate (bacterial route): step 1/1. Functionally, two distinct, membrane-bound, FAD-containing enzymes are responsible for the catalysis of fumarate and succinate interconversion; the fumarate reductase is used in anaerobic growth, and the succinate dehydrogenase is used in aerobic growth. This Salmonella typhimurium (strain LT2 / SGSC1412 / ATCC 700720) protein is Succinate dehydrogenase flavoprotein subunit (sdhA).